The following is a 122-amino-acid chain: Large ribosomal subunit protein uL14 (122 aa).

Belongs to the universal ribosomal protein uL14 family. In terms of assembly, part of the 50S ribosomal subunit. Forms a cluster with proteins L3 and L19. In the 70S ribosome, L14 and L19 interact and together make contacts with the 16S rRNA in bridges B5 and B8.

Binds to 23S rRNA. Forms part of two intersubunit bridges in the 70S ribosome. The polypeptide is Large ribosomal subunit protein uL14 (Methylibium petroleiphilum (strain ATCC BAA-1232 / LMG 22953 / PM1)).